A 125-amino-acid chain; its full sequence is Small ribosomal subunit protein bS6 (125 aa).

Residues 99–125 (PSIMMKSVEREEARKASTEASAPAQAQ) form a disordered region. The segment covering 105-115 (SVEREEARKAS) has biased composition (basic and acidic residues). The segment covering 116 to 125 (TEASAPAQAQ) has biased composition (polar residues).

The protein belongs to the bacterial ribosomal protein bS6 family.

Binds together with bS18 to 16S ribosomal RNA. This chain is Small ribosomal subunit protein bS6, found in Bordetella petrii (strain ATCC BAA-461 / DSM 12804 / CCUG 43448).